Reading from the N-terminus, the 132-residue chain is Protein NrdI (132 aa).

It belongs to the NrdI family.

Functionally, probably involved in ribonucleotide reductase function. The polypeptide is Protein NrdI (Staphylococcus aureus (strain Mu3 / ATCC 700698)).